The sequence spans 423 residues: MTTHPLTMPIPEYFEEILESVRSDVSGEVAQYIPQLKDADPNPLALAMCTVDGHIYGAGDDEHEFTMQSVSKPFAYALALQEQGPEKVFATVGLEPSGEAFNELSLDGSTNRPMNPMINAGAIAVNQLINGSESSVEDRVEKIRSYFSALAGRELNIDRQLSETEIEGADRNLSIAHMLRNYGIIEDDAHDAVLSYTLQCSVKVTARDLAVMTATLAAGGTQPLTGEKLVDARVARLVLSTMASAGMYDEAGQWLATVGIPAKSGVSGGLVGVLPGQLGLATFSPRLNSQGNPVRGVEIFKALSEDMGLHLMSAELLTQHAVRAIEERGDTTVIQLQGAMNFSAAENFLFTVTDHDFTGEKVVLDISRVPMFRPMGRRLVKEGLRRIRDNGFKVAIYDPEDILPDFDFSDGTKSPQVDDPEEL.

The glutaminase stretch occupies residues 27-312 (GEVAQYIPQL…LSEDMGLHLM (286 aa)). Residues Ser-69, Asn-119, Glu-165, Asn-172, Tyr-196, Tyr-248, and Val-266 each contribute to the substrate site. Residues 321 to 423 (AVRAIEERGD…SPQVDDPEEL (103 aa)) enclose the STAS domain.

This sequence belongs to the glutaminase family. Homotetramer.

It catalyses the reaction L-glutamine + H2O = L-glutamate + NH4(+). This is Glutaminase (glsA) from Corynebacterium efficiens (strain DSM 44549 / YS-314 / AJ 12310 / JCM 11189 / NBRC 100395).